We begin with the raw amino-acid sequence, 306 residues long: Curved DNA-binding protein (306 aa).

The J domain maps to 5-69 (DYYAIMGVKP…QRRAEYDQMW (65 aa)).

The protein resides in the cytoplasm. The protein localises to the nucleoid. DNA-binding protein that preferentially recognizes a curved DNA sequence. It is probably a functional analog of DnaJ; displays overlapping activities with DnaJ, but functions under different conditions, probably acting as a molecular chaperone in an adaptive response to environmental stresses other than heat shock. Lacks autonomous chaperone activity; binds native substrates and targets them for recognition by DnaK. Its activity is inhibited by the binding of CbpM. The polypeptide is Curved DNA-binding protein (Escherichia coli O127:H6 (strain E2348/69 / EPEC)).